A 101-amino-acid polypeptide reads, in one-letter code: Small ribosomal subunit protein uS14 (101 aa).

This sequence belongs to the universal ribosomal protein uS14 family. In terms of assembly, part of the 30S ribosomal subunit. Contacts proteins S3 and S10.

Binds 16S rRNA, required for the assembly of 30S particles and may also be responsible for determining the conformation of the 16S rRNA at the A site. This Gluconobacter oxydans (strain 621H) (Gluconobacter suboxydans) protein is Small ribosomal subunit protein uS14.